Consider the following 579-residue polypeptide: 6-deoxy-6-sulfo-D-gluconate dehydratase (579 aa).

The [4Fe-4S] cluster site is built by cysteine 59, cysteine 127, and cysteine 200.

Belongs to the IlvD/Edd family. As to quaternary structure, homodimer. Requires [4Fe-4S] cluster as cofactor.

The enzyme catalyses 6-deoxy-6-sulfo-D-gluconate = 2-dehydro-3,6-dideoxy-6-sulfo-D-gluconate + H2O. In terms of biological role, catalyzes the dehydration of 6-deoxy-6-sulfo-D-gluconate to 2-dehydro-3,6-dideoxy-6-sulfo-D-gluconate. Is involved in a degradation pathway of sulfoquinovose (SQ) that allows P.putida SQ1 to use SQ as the sole carbon and energy source for growth. The sequence is that of 6-deoxy-6-sulfo-D-gluconate dehydratase from Pseudomonas putida (Arthrobacter siderocapsulatus).